Consider the following 96-residue polypeptide: RNA-binding protein Hfq (96 aa).

One can recognise a Sm domain in the interval 9 to 68; that stretch reads DPYLNALRRERIPVSIYLVNGIKLQGQIESFDQFVILLKNTVNQMVYKHAISTVVPARSV. Residues 67–96 form a disordered region; that stretch reads SVSHHNNSNNSNQQNYQQEQQTDSNVEKAE. Over residues 72–87 the composition is skewed to low complexity; sequence NNSNNSNQQNYQQEQQ.

Belongs to the Hfq family. Homohexamer.

RNA chaperone that binds small regulatory RNA (sRNAs) and mRNAs to facilitate mRNA translational regulation in response to envelope stress, environmental stress and changes in metabolite concentrations. Also binds with high specificity to tRNAs. The sequence is that of RNA-binding protein Hfq from Pasteurella multocida (strain Pm70).